We begin with the raw amino-acid sequence, 440 residues long: Chitinase-like protein Idgf2 (440 aa).

The N-terminal stretch at 1-20 (MKAWIWFTFVACLFAASTEA) is a signal peptide. A GH18 domain is found at 22 to 440 (SNLVCYYDSS…PILRAIKYRL (419 aa)). A disulfide bond links cysteine 26 and cysteine 53. A glycan (N-linked (GlcNAc...) asparagine) is linked at asparagine 220. An intrachain disulfide couples cysteine 342 to cysteine 425.

This sequence belongs to the glycosyl hydrolase 18 family. IDGF subfamily. Glycosylated. As to expression, primarily expressed in yolk cells and fat body. In larvae, it is expressed in the imaginal ring and weakly expressed in imaginal disks. More strongly expressed than Idgf1 and Idgf3.

Its subcellular location is the secreted. Its function is as follows. Cooperates with insulin-like peptides to stimulate the proliferation, polarization and motility of imaginal disk cells. May act by stabilizing the binding of insulin-like peptides to its receptor through a simultaneous interaction with both molecules to form a multiprotein signaling complex. The protein is Chitinase-like protein Idgf2 (Idgf2) of Drosophila melanogaster (Fruit fly).